Consider the following 173-residue polypeptide: Nicotinamide-nucleotide adenylyltransferase (173 aa).

It belongs to the archaeal NMN adenylyltransferase family.

It is found in the cytoplasm. It catalyses the reaction beta-nicotinamide D-ribonucleotide + ATP + H(+) = diphosphate + NAD(+). It functions in the pathway cofactor biosynthesis; NAD(+) biosynthesis; NAD(+) from nicotinamide D-ribonucleotide: step 1/1. In Methanosarcina barkeri (strain Fusaro / DSM 804), this protein is Nicotinamide-nucleotide adenylyltransferase.